We begin with the raw amino-acid sequence, 488 residues long: UDP-N-acetylmuramoyl-L-alanyl-D-glutamate--2,6-diaminopimelate ligase (488 aa).

Ser-29 contacts UDP-N-acetyl-alpha-D-muramoyl-L-alanyl-D-glutamate. 108–114 (GTSGKTS) is an ATP binding site. UDP-N-acetyl-alpha-D-muramoyl-L-alanyl-D-glutamate is bound by residues 150–151 (TT), Ser-177, Gln-183, and Arg-185. An N6-carboxylysine modification is found at Lys-217. Meso-2,6-diaminopimelate contacts are provided by residues Arg-381, 405–408 (DNPR), Gly-453, and Glu-457. The Meso-diaminopimelate recognition motif motif lies at 405–408 (DNPR).

This sequence belongs to the MurCDEF family. MurE subfamily. Requires Mg(2+) as cofactor. Post-translationally, carboxylation is probably crucial for Mg(2+) binding and, consequently, for the gamma-phosphate positioning of ATP.

Its subcellular location is the cytoplasm. The catalysed reaction is UDP-N-acetyl-alpha-D-muramoyl-L-alanyl-D-glutamate + meso-2,6-diaminopimelate + ATP = UDP-N-acetyl-alpha-D-muramoyl-L-alanyl-gamma-D-glutamyl-meso-2,6-diaminopimelate + ADP + phosphate + H(+). It participates in cell wall biogenesis; peptidoglycan biosynthesis. Catalyzes the addition of meso-diaminopimelic acid to the nucleotide precursor UDP-N-acetylmuramoyl-L-alanyl-D-glutamate (UMAG) in the biosynthesis of bacterial cell-wall peptidoglycan. The chain is UDP-N-acetylmuramoyl-L-alanyl-D-glutamate--2,6-diaminopimelate ligase from Brucella melitensis biotype 1 (strain ATCC 23456 / CCUG 17765 / NCTC 10094 / 16M).